Reading from the N-terminus, the 322-residue chain is uncharacterized protein (322 aa).

5 helical membrane-spanning segments follow: residues 159–179 (GIIFCIVSILYCIINIRMLYL), 203–223 (MNIPALGAWGSVVAITFYIWL), 234–254 (GGILTMTAFLLSAIAAIRVGL), 267–287 (FEGSSAVVIAIILGALPLIPY), and 296–316 (TLLSGYLSIVISMIINSFFAW).

Its subcellular location is the membrane. This is an uncharacterized protein from Dictyostelium discoideum (Social amoeba).